Reading from the N-terminus, the 371-residue chain is Opsin Rh1 (371 aa).

Residues 1 to 47 lie on the Extracellular side of the membrane; it reads MERYSTPLIGPSFAALTNGSVTDKVTPDMAHLVHPYWNQFPAMEPKW. An N-linked (GlcNAc...) asparagine glycan is attached at Asn18. A helical membrane pass occupies residues 48–72; it reads AKFLAAYMVLIATISWCGNGVVIYI. Residues 73–84 lie on the Cytoplasmic side of the membrane; it reads FSTTKSLRTPAN. The helical transmembrane segment at 85-110 threads the bilayer; the sequence is LLVINLAISDFGIMITNTPMMGINLF. At 111 to 124 the chain is on the extracellular side; that stretch reads YETWVLGPLMCDIY. Cys121 and Cys198 form a disulfide bridge. The helical transmembrane segment at 125 to 144 threads the bilayer; the sequence is GGLGSAFGCSSILSMCMISL. Residues 145–163 are Cytoplasmic-facing; the sequence is DRYNVIVKGMAGQPMTIKL. A helical transmembrane segment spans residues 164–187; sequence AIMKIALIWFMASIWTLAPVFGWS. The Extracellular portion of the chain corresponds to 188-211; it reads RYVPEGNLTSCGIDYLERDWNPRS. The helical transmembrane segment at 212–239 threads the bilayer; it reads YLIFYSIFVYYLPLFLICYSYWFIIAAV. At 240-274 the chain is on the cytoplasmic side; that stretch reads SAHEKAMREQAKKMNVKSLRSSEDADKSAEGKLAK. Residues 275-298 form a helical membrane-spanning segment; that stretch reads VALVTISLWFMAWTPYTIINTLGL. Residues 299 to 305 are Extracellular-facing; that stretch reads FKYEGLT. Residues 306–330 traverse the membrane as a helical segment; the sequence is PLNTIWGACFAKSAACYNPIVYGIS. The residue at position 317 (Lys317) is an N6-(retinylidene)lysine. Topologically, residues 331–371 are cytoplasmic; the sequence is HPKYGIALKEKCPCCVFGKVDDGKASDATSQATNNESETKA.

It belongs to the G-protein coupled receptor 1 family. Opsin subfamily. Post-translationally, phosphorylated on some or all of the serine and threonine residues present in the C-terminal region.

The protein localises to the cell projection. The protein resides in the rhabdomere membrane. Visual pigments are the light-absorbing molecules that mediate vision. They consist of an apoprotein, opsin, covalently linked to cis-retinal. The sequence is that of Opsin Rh1 (NINAE) from Calliphora vicina (Blue blowfly).